The following is a 979-amino-acid chain: MHC class II regulatory factor RFX1 (979 aa).

3 disordered regions span residues methionine 1 to glutamine 136, glutamine 181 to threonine 227, and threonine 370 to glycine 405. Pro residues predominate over residues alanine 12 to proline 44. Over residues threonine 45–glutamine 73 the composition is skewed to low complexity. The residue at position 60 (serine 60) is a Phosphoserine. The span at valine 81–alanine 96 shows a compositional bias: pro residues. The span at glutamate 114 to serine 126 shows a compositional bias: polar residues. The segment covering glutamine 127 to glutamine 136 has biased composition (low complexity). Polar residues-rich tracts occupy residues glycine 190–histidine 203 and serine 209–threonine 220. Residues threonine 370–serine 379 are compositionally biased toward low complexity. Residues serine 380 to glycine 405 are compositionally biased toward gly residues. Positions threonine 438–alanine 513 form a DNA-binding region, RFX-type winged-helix. The segment at phenylalanine 744–serine 979 is necessary for dimerization. Positions serine 915–proline 960 are disordered. Positions aspartate 922–proline 938 are enriched in acidic residues. Phosphoserine is present on residues serine 978 and serine 979.

It belongs to the RFX family. In terms of assembly, homodimer; binds DNA as a homodimer. Heterodimer; heterodimerizes with RFX2 and RFX3.

The protein localises to the nucleus. Its function is as follows. Regulatory factor essential for MHC class II genes expression. Binds to the X boxes of MHC class II genes. Also binds to an inverted repeat (ENH1) required for hepatitis B virus genes expression and to the most upstream element (alpha) of the RPL30 promoter. The sequence is that of MHC class II regulatory factor RFX1 (RFX1) from Homo sapiens (Human).